The following is a 455-amino-acid chain: Argininosuccinate lyase (455 aa).

Belongs to the lyase 1 family. Argininosuccinate lyase subfamily.

Its subcellular location is the cytoplasm. It carries out the reaction 2-(N(omega)-L-arginino)succinate = fumarate + L-arginine. Its pathway is amino-acid biosynthesis; L-arginine biosynthesis; L-arginine from L-ornithine and carbamoyl phosphate: step 3/3. In Shewanella baltica (strain OS155 / ATCC BAA-1091), this protein is Argininosuccinate lyase.